The primary structure comprises 454 residues: NADP-specific glutamate dehydrogenase (454 aa).

Ser-2 is modified (N-acetylserine). Residue Lys-114 is part of the active site.

The protein belongs to the Glu/Leu/Phe/Val dehydrogenases family. Homohexamer.

The catalysed reaction is L-glutamate + NADP(+) + H2O = 2-oxoglutarate + NH4(+) + NADPH + H(+). In Neurospora sitophila (Chrysonilia sitophila), this protein is NADP-specific glutamate dehydrogenase (GDH).